The primary structure comprises 296 residues: Probable xyloglucan endotransglucosylase/hydrolase 1 (296 aa).

The N-terminal stretch at 1-22 (MGIIKGVLFSIVLINLSLVVFC) is a signal peptide. One can recognise a GH16 domain in the interval 23 to 221 (GYPRRPVDVP…WANAPFTASY (199 aa)). The active-site Nucleophile is the glutamate 107. Glutamate 111 functions as the Proton donor in the catalytic mechanism. Xyloglucan is bound at residue glutamate 111. A glycan (N-linked (GlcNAc...) asparagine) is linked at asparagine 115. Xyloglucan is bound by residues 124–126 (QTN), 134–136 (NRE), 200–201 (DW), and glycine 205. Intrachain disulfides connect cysteine 229–cysteine 240 and cysteine 277–cysteine 290. Arginine 282 serves as a coordination point for xyloglucan.

It belongs to the glycosyl hydrolase 16 family. XTH group 1 subfamily. In terms of processing, contains at least one intrachain disulfide bond essential for its enzymatic activity.

It is found in the secreted. Its subcellular location is the cell wall. It localises to the extracellular space. The protein localises to the apoplast. It catalyses the reaction breaks a beta-(1-&gt;4) bond in the backbone of a xyloglucan and transfers the xyloglucanyl segment on to O-4 of the non-reducing terminal glucose residue of an acceptor, which can be a xyloglucan or an oligosaccharide of xyloglucan.. In terms of biological role, catalyzes xyloglucan endohydrolysis (XEH) and/or endotransglycosylation (XET). Cleaves and religates xyloglucan polymers, an essential constituent of the primary cell wall, and thereby participates in cell wall construction of growing tissues. The sequence is that of Probable xyloglucan endotransglucosylase/hydrolase 1 (XTH1) from Solanum lycopersicum (Tomato).